Here is a 544-residue protein sequence, read N- to C-terminus: Probable protein kinase UbiB (544 aa).

The 382-residue stretch at 123 to 504 (DFDENALASA…QRWQKKMFVL (382 aa)) folds into the Protein kinase domain. ATP contacts are provided by residues 129–137 (LASASIAQV) and K155. D290 acts as the Proton acceptor in catalysis. Helical transmembrane passes span 501 to 521 (MFVL…FAAL) and 523 to 543 (LAIS…GFLL).

It belongs to the ABC1 family. UbiB subfamily.

The protein resides in the cell inner membrane. Its pathway is cofactor biosynthesis; ubiquinone biosynthesis [regulation]. In terms of biological role, is probably a protein kinase regulator of UbiI activity which is involved in aerobic coenzyme Q (ubiquinone) biosynthesis. In Histophilus somni (strain 129Pt) (Haemophilus somnus), this protein is Probable protein kinase UbiB.